The following is a 468-amino-acid chain: Argininosuccinate lyase (468 aa).

The protein belongs to the lyase 1 family. Argininosuccinate lyase subfamily.

Its subcellular location is the cytoplasm. The catalysed reaction is 2-(N(omega)-L-arginino)succinate = fumarate + L-arginine. Its pathway is amino-acid biosynthesis; L-arginine biosynthesis; L-arginine from L-ornithine and carbamoyl phosphate: step 3/3. The chain is Argininosuccinate lyase from Alkalilimnicola ehrlichii (strain ATCC BAA-1101 / DSM 17681 / MLHE-1).